Reading from the N-terminus, the 406-residue chain is Arginine biosynthesis bifunctional protein ArgJ (406 aa).

6 residues coordinate substrate: Thr152, Lys179, Thr190, Glu277, Asn401, and Ser406. Thr190 (nucleophile) is an active-site residue.

It belongs to the ArgJ family. As to quaternary structure, heterotetramer of two alpha and two beta chains.

It is found in the cytoplasm. It catalyses the reaction N(2)-acetyl-L-ornithine + L-glutamate = N-acetyl-L-glutamate + L-ornithine. The enzyme catalyses L-glutamate + acetyl-CoA = N-acetyl-L-glutamate + CoA + H(+). It participates in amino-acid biosynthesis; L-arginine biosynthesis; L-ornithine and N-acetyl-L-glutamate from L-glutamate and N(2)-acetyl-L-ornithine (cyclic): step 1/1. It functions in the pathway amino-acid biosynthesis; L-arginine biosynthesis; N(2)-acetyl-L-ornithine from L-glutamate: step 1/4. Its function is as follows. Catalyzes two activities which are involved in the cyclic version of arginine biosynthesis: the synthesis of N-acetylglutamate from glutamate and acetyl-CoA as the acetyl donor, and of ornithine by transacetylation between N(2)-acetylornithine and glutamate. The sequence is that of Arginine biosynthesis bifunctional protein ArgJ from Neisseria gonorrhoeae (strain ATCC 700825 / FA 1090).